A 197-amino-acid polypeptide reads, in one-letter code: Probable deoxycytidylate deaminase (197 aa).

One can recognise a CMP/dCMP-type deaminase domain in the interval 49-183; it reads KKHQRFLRIA…KMLDHARLPY (135 aa). Zn(2+) is bound at residue histidine 117. The active-site Proton donor is glutamate 119. 2 residues coordinate Zn(2+): cysteine 143 and cysteine 146.

Belongs to the cytidine and deoxycytidylate deaminase family. It depends on Zn(2+) as a cofactor.

It catalyses the reaction dCMP + H2O + H(+) = dUMP + NH4(+). In terms of biological role, supplies the nucleotide substrate for thymidylate synthetase. The sequence is that of Probable deoxycytidylate deaminase from Caenorhabditis elegans.